We begin with the raw amino-acid sequence, 534 residues long: Inorganic phosphate transporter 1-6 (534 aa).

At 1-29 (MGGGGGEQQQLEVLHALDVAKTQWYHFTA) the chain is on the cytoplasmic side. The helical transmembrane segment at 30–50 (IVVAGMGFFTDAYDLFCISLV) threads the bilayer. The Extracellular segment spans residues 51–75 (TKLLGRIYYRVDGSPSPGTLPPHVS). Residues 76–96 (ASVNGVAFVGTLSGQLFFGWL) form a helical membrane-spanning segment. The Cytoplasmic segment spans residues 97–104 (GDKLGRKR). The chain crosses the membrane as a helical span at residues 105–125 (VYGITLMLMVLCSLASALSFG). Topologically, residues 126-127 (HT) are extracellular. The chain crosses the membrane as a helical span at residues 128–148 (PTSVMATLCFFRFWLGFGIGG). Topologically, residues 149 to 168 (DYPLSATIMSEYANKKTRGA) are cytoplasmic. A helical membrane pass occupies residues 169–189 (FIAAVFAMQGFGIITGGLVAI). Residues 190 to 216 (LVSASFRAAFPAPPYGEDPVASTPPQA) lie on the Extracellular side of the membrane. A helical transmembrane segment spans residues 217–237 (DFVWRIILMLGALPAALTYYW). The Cytoplasmic segment spans residues 238–294 (RTKMPETARYTALVANNAKQAAADMSKVLQVVEMRNIGNNGGSRRPFGLFSGEFVRR). The helical transmembrane segment at 295–315 (HGLHLVGTSATWLLLDIAFYS) threads the bilayer. Topologically, residues 316–350 (QNLFQKDIFSAVGWIPKAATMSALEELFRIARAQT) are extracellular. Residues 351-371 (LIALCGTVPGYWFTVALIDVV) form a helical membrane-spanning segment. Residues 372 to 375 (GRFK) lie on the Cytoplasmic side of the membrane. Residues 376–396 (IQAVGFFMMTLFMLTLALPYH) traverse the membrane as a helical segment. The Extracellular segment spans residues 397–405 (HWTAPGKNH). Residues 406 to 426 (VGFLLLYGLTFFFANFGPNST) form a helical membrane-spanning segment. The Cytoplasmic portion of the chain corresponds to 427–445 (TFIVPAEIFPARLRATCHG). A helical membrane pass occupies residues 446–466 (ISAASGKLGAIVGSFGFLYLA). The Extracellular portion of the chain corresponds to 467-486 (QSPDRSKTEHGYPPGIGVRN). A helical membrane pass occupies residues 487 to 507 (SLFLLAACNLLGLLFTFLVPE). Residues 508-534 (SKGKSLEEMSGDAEAQEEAPPPLQTVL) are Cytoplasmic-facing. A disordered region spans residues 514–534 (EEMSGDAEAQEEAPPPLQTVL).

It belongs to the major facilitator superfamily. Phosphate:H(+) symporter (TC 2.A.1.9) family. In terms of tissue distribution, highly expressed in leaves and at low levels in roots. Expressed in leaf xylem parenchyma cells.

Its subcellular location is the membrane. Functionally, high-affinity transporter for external inorganic phosphate (Pi). Probably involved in Pi uptake, translocation and internal transport throughout the plant. The sequence is that of Inorganic phosphate transporter 1-6 (PHT1-6) from Oryza sativa subsp. japonica (Rice).